We begin with the raw amino-acid sequence, 434 residues long: Nicotinate phosphoribosyltransferase (434 aa).

At H242 the chain carries Phosphohistidine; by autocatalysis.

It belongs to the NAPRTase family. Transiently phosphorylated on a His residue during the reaction cycle. Phosphorylation strongly increases the affinity for substrates and increases the rate of nicotinate D-ribonucleotide production. Dephosphorylation regenerates the low-affinity form of the enzyme, leading to product release.

The catalysed reaction is nicotinate + 5-phospho-alpha-D-ribose 1-diphosphate + ATP + H2O = nicotinate beta-D-ribonucleotide + ADP + phosphate + diphosphate. It participates in cofactor biosynthesis; NAD(+) biosynthesis; nicotinate D-ribonucleotide from nicotinate: step 1/1. Its function is as follows. Catalyzes the synthesis of beta-nicotinate D-ribonucleotide from nicotinate and 5-phospho-D-ribose 1-phosphate at the expense of ATP. In Brucella abortus (strain S19), this protein is Nicotinate phosphoribosyltransferase.